The primary structure comprises 645 residues: Synaptotagmin-16 (645 aa).

Disordered regions lie at residues 102-121 (AQNSSPSLSQHAKDSCSTMS), 144-192 (EHHL…DSDE), and 206-344 (QSFR…PSGV). Positions 167–177 (ETVNGKKQVNS) are enriched in polar residues. The span at 179 to 192 (GDDEELSTSSDSDE) shows a compositional bias: acidic residues. Residues 287–303 (HQESSVVQSLRRQSTEG) show a composition bias toward polar residues. Positions 350–469 (KCGDLDVIFE…HPEGEMKVTL (120 aa)) constitute a C2 1 domain. The disordered stretch occupies residues 478 to 503 (SSGGSPLSPSAVSHSDSTSSTQSLSH). Positions 485-502 (SPSAVSHSDSTSSTQSLS) are enriched in low complexity. Positions 505-640 (GAPELLVGLS…TKGQQICRWH (136 aa)) constitute a C2 2 domain.

This sequence belongs to the synaptotagmin family. In terms of assembly, homodimer. Can also form heterodimers. In terms of tissue distribution, expressed in brain.

Functionally, may be involved in the trafficking and exocytosis of secretory vesicles in non-neuronal tissues. Is Ca(2+)-independent. In Homo sapiens (Human), this protein is Synaptotagmin-16 (SYT16).